The following is a 132-amino-acid chain: Small ribosomal subunit protein uS9 (132 aa).

This sequence belongs to the universal ribosomal protein uS9 family.

The chain is Small ribosomal subunit protein uS9 from Leptospira interrogans serogroup Icterohaemorrhagiae serovar copenhageni (strain Fiocruz L1-130).